Reading from the N-terminus, the 150-residue chain is Putative transmembrane protein DDB_G0277665 (150 aa).

2 consecutive transmembrane segments (helical) span residues 4 to 24 (TLII…FNIL) and 42 to 62 (VIVG…FLPL).

The protein resides in the membrane. The protein is Putative transmembrane protein DDB_G0277665 of Dictyostelium discoideum (Social amoeba).